The sequence spans 1088 residues: Insulin receptor substrate 1-B (1088 aa).

Residues 15 to 117 enclose the PH domain; it reads DVRKVGYLRK…WYQALVDLHN (103 aa). At tyrosine 48 the chain carries Phosphotyrosine. In terms of domain architecture, IRS-type PTB spans 155–259; that stretch reads FKEVWQVIMK…EAMKALSDEF (105 aa). The interval 259-428 is disordered; that stretch reads FRPRSKSQSS…GGFISSDEYG (170 aa). Composition is skewed to low complexity over residues 264–278, 302–312, 379–400, and 408–420; these read KSQSSSNCSNPISVP, SATATSPAGGA, SPSATSPVSLSSSSTSGHGSTS, and SSASISGSPSDGG. Phosphoserine is present on serine 307. Tyrosine 460 carries the phosphotyrosine; by INSR modification. The YXXM motif 1 signature appears at 460 to 463; the sequence is YICM. Polar residues-rich tracts occupy residues 466 to 479 and 499 to 516; these read SSSHLQRGPQQRYQ and SSGTSPPTVSHQKTPSQS. 2 disordered regions span residues 466–485 and 496–516; these read SSSHLQRGPQQRYQPSRGEE and RTHSSGTSPPTVSHQKTPSQS. 5 consecutive short sequence motifs (YXXM motif) follow at residues 521–524, 567–570, 584–587, 612–615, and 654–657; these read YTEM, YMPM, YMMM, and YINM. A phosphotyrosine; by INSR mark is found at tyrosine 567 and tyrosine 584. Position 612 is a phosphotyrosine (tyrosine 612). The disordered stretch occupies residues 704-785; that stretch reads NLRISANSGH…PPEPKSPGEY (82 aa). Residues 707–718 show a composition bias toward polar residues; it reads ISANSGHNLYTE. Residues 719–729 are compositionally biased toward low complexity; it reads DSSSSSTSSDS. Phosphotyrosine; by INSR occurs at positions 785 and 823. Residues 785–787 form a GRB2-binding region; it reads YVN. The short motif at 823 to 826 is the YXXM motif 7 element; sequence YMNM. Polar residues predominate over residues 840–863; it reads TSSYEPPNKPVNSVCPTETCSSSR. The segment at 840 to 868 is disordered; the sequence is TSSYEPPNKPVNSVCPTETCSSSRPPIRG. Position 875 is a phosphotyrosine; by INSR (tyrosine 875). 2 consecutive short sequence motifs (YXXM motif) follow at residues 875–878 and 909–912; these read YMSM and YAEM. Positions 935–1006 are disordered; the sequence is ASRSSLLGQG…SGEDVKRHSS (72 aa). 2 stretches are compositionally biased toward polar residues: residues 946-961 and 980-995; these read GPSAFTRVSLSPNRNP and ETFSSTPTTARVTTGP. Phosphotyrosine; by INSR occurs at positions 1037 and 1069.

In terms of assembly, interacts with the NPXY motif of tyrosine-phosphorylated igf1r and insr via the PTB domain. Binds to phosphatidylinositol 3-kinase p85 subunit at a low level in vitro prior to phosphorylation. Binding is greatly enhanced following tyrosine phosphorylation by insr and probably occurs via the phosphorylated YXXM motifs. Post-translationally, phosphorylation of Tyr-785 is required for grb2-binding.

Functionally, may mediate the control of various cellular processes by insulin. When phosphorylated by the insulin receptor binds specifically to various cellular proteins containing SH2 domains such as phosphatidylinositol 3-kinase p85 subunit or grb2. Activates phosphatidylinositol 3-kinase when bound to the regulatory p85 subunit. The sequence is that of Insulin receptor substrate 1-B (irs1-b) from Xenopus laevis (African clawed frog).